Consider the following 273-residue polypeptide: 4-diphosphocytidyl-2-C-methyl-D-erythritol kinase (273 aa).

Lys-9 is a catalytic residue. 90–100 contacts ATP; the sequence is PVAAGLGGGSA. The active site involves Asp-129.

The protein belongs to the GHMP kinase family. IspE subfamily.

The catalysed reaction is 4-CDP-2-C-methyl-D-erythritol + ATP = 4-CDP-2-C-methyl-D-erythritol 2-phosphate + ADP + H(+). Its pathway is isoprenoid biosynthesis; isopentenyl diphosphate biosynthesis via DXP pathway; isopentenyl diphosphate from 1-deoxy-D-xylulose 5-phosphate: step 3/6. Its function is as follows. Catalyzes the phosphorylation of the position 2 hydroxy group of 4-diphosphocytidyl-2C-methyl-D-erythritol. In Erythrobacter litoralis (strain HTCC2594), this protein is 4-diphosphocytidyl-2-C-methyl-D-erythritol kinase.